Reading from the N-terminus, the 87-residue chain is Acyl-CoA-binding protein (87 aa).

The residue at position 2 (serine 2) is an N-acetylserine. An ACB domain is found at 2–87; the sequence is SQAEFDKAAE…VEELKKKYGI (86 aa). The residue at position 8 (lysine 8) is an N6-acetyllysine; alternate. N6-succinyllysine; alternate is present on lysine 8. An acyl-CoA is bound at residue lysine 14. The residue at position 17 (lysine 17) is an N6-succinyllysine. Lysine 19 carries the N6-acetyllysine modification. Tyrosine 29 carries the post-translational modification Phosphotyrosine. An acyl-CoA-binding positions include 29–33, lysine 51, lysine 55, and tyrosine 74; that span reads YSHYK. At lysine 51 the chain carries N6-acetyllysine. Position 55 is an N6-acetyllysine; alternate (lysine 55). N6-succinyllysine; alternate is present on lysine 55. Residue lysine 55 is modified to N6-(2-hydroxyisobutyryl)lysine; alternate. At lysine 55 the chain carries N6-malonyllysine; alternate. At lysine 77 the chain carries N6-acetyllysine; alternate. An N6-succinyllysine; alternate modification is found at lysine 77.

It belongs to the ACBP family. As to quaternary structure, monomer.

It localises to the endoplasmic reticulum. The protein resides in the golgi apparatus. In terms of biological role, binds medium- and long-chain acyl-CoA esters with very high affinity and may function as an intracellular carrier of acyl-CoA esters. It is also able to displace diazepam from the benzodiazepine (BZD) recognition site located on the GABA type A receptor. It is therefore possible that this protein also acts as a neuropeptide to modulate the action of the GABA receptor. The protein is Acyl-CoA-binding protein (DBI) of Bos taurus (Bovine).